We begin with the raw amino-acid sequence, 249 residues long: Type III pantothenate kinase (249 aa).

6-13 contacts ATP; that stretch reads DVGNTHTT. 101–104 is a binding site for substrate; that stretch reads GADR. The active-site Proton acceptor is the Asp-103. Residue Asp-123 coordinates K(+). Thr-126 is a binding site for ATP. Substrate is bound at residue Thr-177.

This sequence belongs to the type III pantothenate kinase family. In terms of assembly, homodimer. NH4(+) is required as a cofactor. Requires K(+) as cofactor.

It is found in the cytoplasm. It carries out the reaction (R)-pantothenate + ATP = (R)-4'-phosphopantothenate + ADP + H(+). Its pathway is cofactor biosynthesis; coenzyme A biosynthesis; CoA from (R)-pantothenate: step 1/5. Functionally, catalyzes the phosphorylation of pantothenate (Pan), the first step in CoA biosynthesis. In Thermosipho africanus (strain TCF52B), this protein is Type III pantothenate kinase.